The following is a 337-amino-acid chain: CMP-sialic acid transporter (337 aa).

Topologically, residues 1 to 9 (MAAPRDNVT) are cytoplasmic. The chain crosses the membrane as a helical span at residues 10 to 30 (LLFKLYCLAVMTLMAAVYTIA). The Lumenal segment spans residues 31-45 (LRYTRTSDKELYFST). The chain crosses the membrane as a helical span at residues 46-64 (TAVCITEVIKLLLSVGILA). K55 serves as a coordination point for CMP-N-acetyl-beta-neuraminate. Residues 65–87 (KETGSLGRFKASLRENVLGSPKE) are Cytoplasmic-facing. The helical transmembrane segment at 88-108 (LLKLSVPSLVYAVQNNMAFLA) threads the bilayer. Residue 101 to 102 (QN) coordinates CMP-N-acetyl-beta-neuraminate. Residues 109-114 (LSNLDA) lie on the Lumenal side of the membrane. The chain crosses the membrane as a helical span at residues 115–135 (AVYQVTYQLKIPCTALCTVLM). 117–124 (YQVTYQLK) serves as a coordination point for CMP-N-acetyl-beta-neuraminate. The Cytoplasmic segment spans residues 136–141 (LNRTLS). Residues 142 to 160 (KLQWVSVFMLCAGVTLVQW) traverse the membrane as a helical segment. The Lumenal portion of the chain corresponds to 161–175 (KPAQATKVVVEQNPL). Residues 176–196 (LGFGAIAIAVLCSGFAGVYFE) traverse the membrane as a helical segment. A CMP-N-acetyl-beta-neuraminate-binding site is contributed by S188. Over 197-209 (KVLKSSDTSLWVR) the chain is Cytoplasmic. 210-214 (NIQMY) contributes to the CMP-N-acetyl-beta-neuraminate binding site. A helical transmembrane segment spans residues 210–228 (NIQMYLSGIIVTLAGVYLS). Topologically, residues 229–243 (DGAEIKEKGFFYGYT) are lumenal. Residues 244-262 (YYVWFVIFLASVGGLYTSV) traverse the membrane as a helical segment. At 263 to 269 (VVKYTDN) the chain is on the cytoplasmic side. Residues 270-288 (IMKGFSAAAAIVLSTIASV) form a helical membrane-spanning segment. K272 provides a ligand contact to CMP-N-acetyl-beta-neuraminate. Over 289-296 (MLFGLQIT) the chain is Lumenal. The chain crosses the membrane as a helical span at residues 297-315 (LTFALGTLLVCVSIYLYGL). Residues 316–337 (PRQDTTSIQQGETASKERVIGV) are Cytoplasmic-facing. The interval 316-337 (PRQDTTSIQQGETASKERVIGV) is disordered.

The protein belongs to the nucleotide-sugar transporter family. SLC35A subfamily. Monomer.

It is found in the golgi apparatus membrane. The protein resides in the golgi apparatus. The enzyme catalyses CMP-N-acetyl-beta-neuraminate(in) + CMP(out) = CMP-N-acetyl-beta-neuraminate(out) + CMP(in). The catalysed reaction is CMP-N-acetyl-beta-neuraminate(in) + AMP(out) = CMP-N-acetyl-beta-neuraminate(out) + AMP(in). It catalyses the reaction CDP-L-ribitol(in) + CDP(out) = CDP-L-ribitol(out) + CDP(in). It carries out the reaction UMP(out) + CMP-N-acetyl-beta-neuraminate(in) = UMP(in) + CMP-N-acetyl-beta-neuraminate(out). Its function is as follows. Transports CMP-sialic acid from the cytosol into the Golgi apparatus, functioning as an antiporter that exchanges CMP-sialic acid for CMP. Binds both CMP-sialic acid and free CMP, but has higher affinity for free CMP. Also able to exchange CMP-sialic acid for AMP and UMP. Also mediates the transport of CDP-ribitol. The protein is CMP-sialic acid transporter of Homo sapiens (Human).